A 226-amino-acid polypeptide reads, in one-letter code: MTEPTGDQTPEIIGVRRGMFGAKGSGDTSGYGRLVRPVALPGGSPRPYGGYFDEVVDRLAEAVGDDAFTESIERVVIHRDELTLEVHRDRLVEVAQALRDDPALRFELCLGVSGVHYPDDTGRELHAAYPLMSITHNRRIRLEVAVPDDDPHIPSLFGVYPTVDWHERETYDFFGIIFDGHPSLTRIEMPDDWVGHPQRKDYPLGGIPVEYHGAEIPPPDQRRAYN.

Residues 1-21 (MTEPTGDQTPEIIGVRRGMFG) are disordered.

This sequence belongs to the complex I 30 kDa subunit family. As to quaternary structure, NDH-1 is composed of 14 different subunits. Subunits NuoB, C, D, E, F, and G constitute the peripheral sector of the complex.

The protein resides in the cell membrane. It carries out the reaction a quinone + NADH + 5 H(+)(in) = a quinol + NAD(+) + 4 H(+)(out). NDH-1 shuttles electrons from NADH, via FMN and iron-sulfur (Fe-S) centers, to quinones in the respiratory chain. The immediate electron acceptor for the enzyme in this species is believed to be a menaquinone. Couples the redox reaction to proton translocation (for every two electrons transferred, four hydrogen ions are translocated across the cytoplasmic membrane), and thus conserves the redox energy in a proton gradient. This is NADH-quinone oxidoreductase subunit C from Mycolicibacterium gilvum (strain PYR-GCK) (Mycobacterium gilvum (strain PYR-GCK)).